We begin with the raw amino-acid sequence, 72 residues long: DNA-directed RNA polymerase subunit omega (72 aa).

Belongs to the RNA polymerase subunit omega family. In terms of assembly, the RNAP catalytic core consists of 2 alpha, 1 beta, 1 beta' and 1 omega subunit. When a sigma factor is associated with the core the holoenzyme is formed, which can initiate transcription.

The enzyme catalyses RNA(n) + a ribonucleoside 5'-triphosphate = RNA(n+1) + diphosphate. In terms of biological role, promotes RNA polymerase assembly. Latches the N- and C-terminal regions of the beta' subunit thereby facilitating its interaction with the beta and alpha subunits. This Staphylococcus aureus (strain Mu3 / ATCC 700698) protein is DNA-directed RNA polymerase subunit omega.